Here is a 101-residue protein sequence, read N- to C-terminus: Small ribosomal subunit protein uS14 (101 aa).

The protein belongs to the universal ribosomal protein uS14 family. Part of the 30S ribosomal subunit. Contacts proteins S3 and S10.

Its function is as follows. Binds 16S rRNA, required for the assembly of 30S particles and may also be responsible for determining the conformation of the 16S rRNA at the A site. This is Small ribosomal subunit protein uS14 from Shewanella woodyi (strain ATCC 51908 / MS32).